The following is a 614-amino-acid chain: Sodium- and chloride-dependent betaine transporter (614 aa).

Topologically, residues 1–44 are cytoplasmic; the sequence is MDRKVAVHEDGYPVVSWVPEEGEMMDQKGKDQVKDRGQWTNKME. A run of 3 helical transmembrane segments spans residues 45-65, 73-92, and 117-137; these read FVLSVAGEIIGLGNVWRFPYL, AFFIPYFIFFFSCGIPVFFL, and GIGMASVVIESYLNIYYIIIL. The Extracellular portion of the chain corresponds to 138–210; it reads AWALFYLFSS…SGIHDLGSLR (73 aa). C157 and C166 are disulfide-bonded. N171 and N183 each carry an N-linked (GlcNAc...) asparagine glycan. 9 consecutive transmembrane segments (helical) span residues 211-229, 238-255, 291-308, 320-341, 374-393, 423-441, 458-478, 499-518, and 538-556; these read WELALCLLLAWIICYFCIW, VVYFTATFPYLMLIILLI, IFFSFAICQGCLTALGSY, IALCFLNSATSFVAGFVVFSIL, MPLSQLWSCLFFIMLLFLGL, VLILAISVLCYLMGLLLVT, GICLLFLSLFEVICIGWVYGA, ISWLFLTPGLCLATFFFSLS, and IGWLLAFSSMACVPLFIII. The Cytoplasmic portion of the chain corresponds to 557 to 614; the sequence is TFLKTQGSFKKRLRRLITPDPSLPQPGRRPPQDGSSAQNCSSSPAKQELIAWEKETHL. The tract at residues 574 to 602 is disordered; sequence TPDPSLPQPGRRPPQDGSSAQNCSSSPAK. A compositionally biased stretch (polar residues) spans 589-601; it reads DGSSAQNCSSSPA.

Belongs to the sodium:neurotransmitter symporter (SNF) (TC 2.A.22) family. SLC6A12 subfamily. In terms of assembly, interacts with LIN7C. As to expression, predominantly expressed in the liver (sinusoidal hepatocyte plasma membranes), also present in the renal medulla, where it localizes to the basolateral membranes of collecting ducts (particularly at the papilla tip) and the thick ascending limbs of Henle (at protein level). Some expression is detected in the leptomeninges, but no expression is detected in brain parenchyma, brain blood vessels, ependymal cells, the renal cortex and the intestine.

Its subcellular location is the basolateral cell membrane. It is found in the cell membrane. The catalysed reaction is 4-aminobutanoate(out) + chloride(out) + 3 Na(+)(out) = 4-aminobutanoate(in) + chloride(in) + 3 Na(+)(in). The enzyme catalyses glycine betaine(out) + 2 chloride(out) + 3 Na(+)(out) = glycine betaine(in) + 2 chloride(in) + 3 Na(+)(in). In terms of biological role, transporter that mediates cellular uptake of betaine and GABA in a sodium- and chloride-dependent process. May have a role in regulation of GABAergic transmission in the brain through the reuptake of GABA into presynaptic terminals, as well as in osmotic regulation. Probably also involved in renal and hepatic osmotic regulation. In Mus musculus (Mouse), this protein is Sodium- and chloride-dependent betaine transporter (Slc6a12).